We begin with the raw amino-acid sequence, 355 residues long: MAKLLGLTLVGLVLALYKNHRSSYQTRLNAFREVTPVDLPNCTLVKGIEAGAEDLEILPNGLTFFSTGLKYPGIKSFDPSKPGKILLMDLNEKEPAVSELAIMGNTLDMSSFNPHGISTFIDEDNTVYLLVVSHPDSSSTVEVFKFQEEERSLLHLKTITHELLPSINDIAAVGPESFYATNDHYFADPYLRSWEMYLGLSWSNVVYYSPDKVRVVADGFDFANGIGISLDGKYVYIAELLAHKIHVYEKHANWTLTPLKVLSFDTLVDNISVDPVTGDLWVGCHPNGMRIFFYDSENPPGSEVLRIQSILSEDPKVTVVYAENGTVLQGTTVAAVYKGKLLIGTVFHRALCCDL.

C42 and C353 are oxidised to a cystine. The Ca(2+) site is built by E53 and D54. The active-site Proton acceptor is the H115. I117, N168, D169, and N224 together coordinate Ca(2+). An N-linked (GlcNAc...) asparagine glycan is attached at N253. Ca(2+)-binding residues include D269 and N270. N-linked (GlcNAc...) asparagine glycans are attached at residues N270 and N324.

Belongs to the paraoxonase family. As to quaternary structure, homodimer. Interacts with CLU. Ca(2+) serves as cofactor. In terms of processing, glycosylated. The signal sequence is not cleaved. Plasma. Associated with HDL.

The protein localises to the secreted. Its subcellular location is the extracellular space. It carries out the reaction a phenyl acetate + H2O = a phenol + acetate + H(+). The catalysed reaction is An aryl dialkyl phosphate + H2O = dialkyl phosphate + an aryl alcohol.. The enzyme catalyses an N-acyl-L-homoserine lactone + H2O = an N-acyl-L-homoserine + H(+). Functionally, hydrolyzes the toxic metabolites of a variety of organophosphorus insecticides. Capable of hydrolyzing a broad spectrum of organophosphate substrates and lactones, and a number of aromatic carboxylic acid esters. Mediates an enzymatic protection of low density lipoproteins against oxidative modification. This is Serum paraoxonase/arylesterase 1 (Pon1) from Rattus norvegicus (Rat).